The sequence spans 338 residues: NADPH dehydrogenase (338 aa).

Tyr28 is a binding site for substrate. FMN-binding residues include Ala60 and Gln102. Residue 164 to 167 (HAAH) coordinates substrate. Residues Arg215 and 307-308 (AR) contribute to the FMN site.

This sequence belongs to the NADH:flavin oxidoreductase/NADH oxidase family. NamA subfamily. In terms of assembly, homotetramer. FMN serves as cofactor.

The catalysed reaction is A + NADPH + H(+) = AH2 + NADP(+). Catalyzes the reduction of the double bond of an array of alpha,beta-unsaturated aldehydes and ketones. It also reduces the nitro group of nitroester and nitroaromatic compounds. It could have a role in detoxification processes. The protein is NADPH dehydrogenase of Bacillus velezensis (strain DSM 23117 / BGSC 10A6 / LMG 26770 / FZB42) (Bacillus amyloliquefaciens subsp. plantarum).